We begin with the raw amino-acid sequence, 367 residues long: 3-dehydroquinate synthase (367 aa).

Residues 69 to 74, 103 to 107, 127 to 128, lysine 140, lysine 149, and 167 to 170 contribute to the NAD(+) site; these read DGESHK, GVIGD, TT, and TLAT. Positions 182, 245, and 262 each coordinate Zn(2+).

It belongs to the sugar phosphate cyclases superfamily. Dehydroquinate synthase family. Co(2+) serves as cofactor. The cofactor is Zn(2+). Requires NAD(+) as cofactor.

Its subcellular location is the cytoplasm. The catalysed reaction is 7-phospho-2-dehydro-3-deoxy-D-arabino-heptonate = 3-dehydroquinate + phosphate. Its pathway is metabolic intermediate biosynthesis; chorismate biosynthesis; chorismate from D-erythrose 4-phosphate and phosphoenolpyruvate: step 2/7. Its function is as follows. Catalyzes the conversion of 3-deoxy-D-arabino-heptulosonate 7-phosphate (DAHP) to dehydroquinate (DHQ). This is 3-dehydroquinate synthase from Stutzerimonas stutzeri (strain A1501) (Pseudomonas stutzeri).